A 974-amino-acid polypeptide reads, in one-letter code: Bifunctional glutamine synthetase adenylyltransferase/adenylyl-removing enzyme (974 aa).

Residues 1–464 (MKNAFLKTQL…HYAALFENEQ (464 aa)) are adenylyl removase. Residues 468-974 (LEIGNLVFTG…YSIFKQVMKY (507 aa)) form an adenylyl transferase region.

This sequence belongs to the GlnE family. It depends on Mg(2+) as a cofactor.

It catalyses the reaction [glutamine synthetase]-O(4)-(5'-adenylyl)-L-tyrosine + phosphate = [glutamine synthetase]-L-tyrosine + ADP. The catalysed reaction is [glutamine synthetase]-L-tyrosine + ATP = [glutamine synthetase]-O(4)-(5'-adenylyl)-L-tyrosine + diphosphate. Involved in the regulation of glutamine synthetase GlnA, a key enzyme in the process to assimilate ammonia. When cellular nitrogen levels are high, the C-terminal adenylyl transferase (AT) inactivates GlnA by covalent transfer of an adenylyl group from ATP to specific tyrosine residue of GlnA, thus reducing its activity. Conversely, when nitrogen levels are low, the N-terminal adenylyl removase (AR) activates GlnA by removing the adenylyl group by phosphorolysis, increasing its activity. The regulatory region of GlnE binds the signal transduction protein PII (GlnB) which indicates the nitrogen status of the cell. This Bartonella henselae (strain ATCC 49882 / DSM 28221 / CCUG 30454 / Houston 1) (Rochalimaea henselae) protein is Bifunctional glutamine synthetase adenylyltransferase/adenylyl-removing enzyme.